A 688-amino-acid chain; its full sequence is PHD finger protein 21A (688 aa).

Residue K65 forms a Glycyl lysine isopeptide (Lys-Gly) (interchain with G-Cter in SUMO2) linkage. Disordered regions lie at residues 78–127 (SQSE…LTAS) and 327–373 (PQTV…ENPQ). Residues 85–127 (QTAQQQPLQPLQQQQPQQPQQQQQQQQQHAQQSAAAPPSLTAS) are compositionally biased toward low complexity. Over residues 336–354 (SLEKQTVKSHPEAEEKQAE) the composition is skewed to basic and acidic residues. A DNA-binding region (a.T hook) is located at residues 434–446 (TRKRGRPPKYNAV). The segment at 449-471 (FGALTPTSPPSSHPDSPENEKTE) is disordered. A Phosphothreonine modification is found at T453. The residue at position 456 (S456) is a Phosphoserine. A PHD-type zinc finger spans residues 497 to 544 (EDFCSVCRKSGQLLMCDTCSRVYHLDCLEPPLKTIPKGMWICPRCQDQ). A coiled-coil region spans residues 571-609 (KEEEKQKLLKWSSDLKQEREQLEQKVKELSSSISKCMEM). A disordered region spans residues 650–688 (GALSNGPDCTPPANAASTPAPSPSSQSCTANCNQGEETK). Residues 660–679 (PPANAASTPAPSPSSQSCTA) show a composition bias toward low complexity.

As to quaternary structure, component of a BHC histone deacetylase complex that contains HDAC1, HDAC2, HMG20B/BRAF35, KDM1A, RCOR1/CoREST and PHF21A/BHC80. The BHC complex may also contain ZMYM2, ZNF217, ZMYM3, GSE1 and GTF2I. In the complex, it interacts directly with HDAC1, HDAC2, HMG20B/BRAF35, KDM1A and RCOR1/CoREST. As to expression, expressed in the brain and testis. Weakly or not expressed in other tissues tested. Localized throughout the central nervous system (CNS) in brain, including the cerebellum, hippocampus, and cortex. Notably present in neuronal cells of granular cell layer and dentate gyrus in cerebellum and hippocampus, respectively. In the seminiferous tubules, the signals it is present strongly in spermatocytes, and weakly in spermatogonia and round spermatids. In some cases, it is also observed solely in spermatocytes (at protein level).

Its subcellular location is the nucleus. Its function is as follows. Component of the BHC complex, a corepressor complex that represses transcription of neuron-specific genes in non-neuronal cells. The BHC complex is recruited at RE1/NRSE sites by REST and acts by deacetylating and demethylating specific sites on histones, thereby acting as a chromatin modifier. In the BHC complex, it may act as a scaffold. Inhibits KDM1A-mediated demethylation of 'Lys-4' of histone H3 in vitro, suggesting a role in demethylation regulation. The polypeptide is PHD finger protein 21A (Mus musculus (Mouse)).